The primary structure comprises 719 residues: Putative alpha-1,3-mannosyltransferase MNT4 (719 aa).

The Cytoplasmic portion of the chain corresponds to 1 to 4 (MKFH). Residues 5–22 (LKRYVIVTSILLSFFLLF) traverse the membrane as a helical segment. Over 23-719 (RRQFLPLTQR…KKLIEIWLQD (697 aa)) the chain is Lumenal. N-linked (GlcNAc...) asparagine glycosylation is found at Asn-148, Asn-273, and Asn-449.

Belongs to the MNN1/MNT family.

The protein resides in the golgi apparatus membrane. Its pathway is protein modification; protein glycosylation. In terms of biological role, responsible for addition of the terminal mannose residues to the outer chain of core N-linked polysaccharides and to O-linked mannotriose. Implicated in late Golgi modifications. This Candida albicans (strain SC5314 / ATCC MYA-2876) (Yeast) protein is Putative alpha-1,3-mannosyltransferase MNT4 (MNT4).